Here is a 197-residue protein sequence, read N- to C-terminus: Imidazoleglycerol-phosphate dehydratase (197 aa).

This sequence belongs to the imidazoleglycerol-phosphate dehydratase family.

It is found in the cytoplasm. It carries out the reaction D-erythro-1-(imidazol-4-yl)glycerol 3-phosphate = 3-(imidazol-4-yl)-2-oxopropyl phosphate + H2O. It functions in the pathway amino-acid biosynthesis; L-histidine biosynthesis; L-histidine from 5-phospho-alpha-D-ribose 1-diphosphate: step 6/9. The chain is Imidazoleglycerol-phosphate dehydratase from Pseudomonas putida (strain ATCC 700007 / DSM 6899 / JCM 31910 / BCRC 17059 / LMG 24140 / F1).